The following is a 142-amino-acid chain: Hemoglobin subunit alpha-A (142 aa).

One can recognise a Globin domain in the interval 2–142; that stretch reads VLSAADKTNV…VGAVLTAKYR (141 aa). His-59 lines the O2 pocket. His-88 contacts heme b.

The protein belongs to the globin family. As to quaternary structure, heterotetramer of two alpha chains and two beta chains. In terms of tissue distribution, red blood cells.

Involved in oxygen transport from the lung to the various peripheral tissues. The chain is Hemoglobin subunit alpha-A (HBAA) from Cairina moschata (Muscovy duck).